The sequence spans 675 residues: PTS system glucose-specific EIICBA component (675 aa).

One can recognise a PTS EIIC type-1 domain in the interval 3–414 (KKLFGQMQRI…FNYKTPGRED (412 aa)). 11 helical membrane-spanning segments follow: residues 16–36 (LMLP…GTAF), 59–79 (MLTG…ALGV), 81–101 (IGLA…FIIL), 126–146 (VLGI…GALA), 170–190 (FVPI…AIIW), 211–231 (LAVF…LHHI), 273–293 (FMQG…LAIY), 303–323 (VVAG…ITEP), 328–348 (FLFV…LSFL), 355–375 (VHLG…GILP), and 378–398 (TAWW…YFVF). The PTS EIIB type-1 domain occupies 425–506 (SQLPFDVLKA…AKIISGEITK (82 aa)). Cys447 acts as the Phosphocysteine intermediate; for EIIB activity in catalysis. Positions 547-651 (DKVFSEKMMG…SIITPVIITN (105 aa)) constitute a PTS EIIA type-1 domain. The active-site Tele-phosphohistidine intermediate; for EIIA activity is the His599.

The protein resides in the cell membrane. It catalyses the reaction N(pros)-phospho-L-histidyl-[protein] + D-glucose(out) = D-glucose 6-phosphate(in) + L-histidyl-[protein]. Functionally, the phosphoenolpyruvate-dependent sugar phosphotransferase system (sugar PTS), a major carbohydrate active transport system, catalyzes the phosphorylation of incoming sugar substrates concomitantly with their translocation across the cell membrane. This system is involved in glucose transport. This chain is PTS system glucose-specific EIICBA component (ptsG), found in Staphylococcus epidermidis.